The primary structure comprises 535 residues: CTP synthase (535 aa).

The amidoligase domain stretch occupies residues 1 to 267 (MTKYIFVTGG…DQIVCDHLKL (267 aa)). Ser13 serves as a coordination point for CTP. Ser13 is a binding site for UTP. 14–19 (SLGKGI) is a binding site for ATP. Position 54 (Tyr54) interacts with L-glutamine. Residue Asp71 coordinates ATP. Asp71 and Glu141 together coordinate Mg(2+). Residues 148–150 (DIE), 188–193 (KTKPTQ), and Lys224 each bind CTP. UTP contacts are provided by residues 188–193 (KTKPTQ) and Lys224. 240-242 (RDA) serves as a coordination point for ATP. Residues 292–534 (KIALVGKYVE…VRASITNKES (243 aa)) form the Glutamine amidotransferase type-1 domain. Gly354 contacts L-glutamine. The active-site Nucleophile; for glutamine hydrolysis is Cys381. Residues 382–385 (LGMQ), Glu405, and Arg462 contribute to the L-glutamine site. Catalysis depends on residues His507 and Glu509.

It belongs to the CTP synthase family. Homotetramer.

It catalyses the reaction UTP + L-glutamine + ATP + H2O = CTP + L-glutamate + ADP + phosphate + 2 H(+). The enzyme catalyses L-glutamine + H2O = L-glutamate + NH4(+). The catalysed reaction is UTP + NH4(+) + ATP = CTP + ADP + phosphate + 2 H(+). It participates in pyrimidine metabolism; CTP biosynthesis via de novo pathway; CTP from UDP: step 2/2. With respect to regulation, allosterically activated by GTP, when glutamine is the substrate; GTP has no effect on the reaction when ammonia is the substrate. The allosteric effector GTP functions by stabilizing the protein conformation that binds the tetrahedral intermediate(s) formed during glutamine hydrolysis. Inhibited by the product CTP, via allosteric rather than competitive inhibition. Its function is as follows. Catalyzes the ATP-dependent amination of UTP to CTP with either L-glutamine or ammonia as the source of nitrogen. Regulates intracellular CTP levels through interactions with the four ribonucleotide triphosphates. In Bacillus cereus (strain AH187), this protein is CTP synthase.